The primary structure comprises 1033 residues: Collagen alpha-2(I) chain (1033 aa).

The interval 1-1033 (SGGFDFSFLP…FGYEGDFYRA (1033 aa)) is disordered. Composition is skewed to low complexity over residues 25-71 (LGPG…ARGP), 154-175 (SRGS…SAGP), and 221-242 (PGAN…AGAP). The segment covering 276 to 285 (GESGGKGEPG) has biased composition (gly residues). Positions 286-296 (SAGPQGPPGSS) are enriched in low complexity. A compositionally biased stretch (gly residues) spans 318–327 (GLRGGPGSRG). Composition is skewed to low complexity over residues 340–356 (PAGA…RGPS) and 391–410 (LPGI…RGEA). Residues 459–468 (GVQGGKGEQG) show a composition bias toward gly residues. Composition is skewed to low complexity over residues 519–528 (PSGAIGSRGP) and 540–550 (EPGVVGAPGTA). Gly residues predominate over residues 551–560 (GPAGSGGLPG). Composition is skewed to low complexity over residues 583–627 (VGTT…PRGS) and 634–654 (VGPA…QPGA). Residues 655–664 (KGERGTKGPK) show a composition bias toward basic and acidic residues. The segment covering 672-682 (PTGPVGSAGPA) has biased composition (low complexity). Residues 692–701 (GSRGDGGPPG) are compositionally biased toward gly residues. Positions 703 to 712 (TGFPGAAGRT) are enriched in low complexity. Residues 749–758 (GETGAGGPPG) are compositionally biased toward gly residues. Composition is skewed to low complexity over residues 766–793 (SGEP…LGLP) and 801–811 (LPGVAGAVGEP). The segment covering 812 to 834 (GPLGIGPPGARGPSGGVGPGVNG) has biased composition (gly residues). The span at 873–909 (AAGAPGPHGAVGPAGKHGNRGEPGPVGSAGPVGALGP) shows a compositional bias: low complexity. Residues 919-930 (RGDKGEAGDKGP) are compositionally biased toward basic and acidic residues. Over residues 1003-1015 (SGPPGPPGPPGPP) the composition is skewed to pro residues.

The protein belongs to the fibrillar collagen family. Trimers of one alpha 2(I) and two alpha 1(I) chains. Interacts (via C-terminus) with TMEM131 (via PapD-L domain); the interaction is direct and is involved in assembly and TRAPPIII ER-to-Golgi transport complex-dependent secretion of collagen. In terms of processing, prolines at the third position of the tripeptide repeating unit (G-X-Y) are hydroxylated in some or all of the chains. As to expression, expressed in bone.

It is found in the secreted. The protein localises to the extracellular space. It localises to the extracellular matrix. Its function is as follows. Type I collagen is a member of group I collagen (fibrillar forming collagen). This chain is Collagen alpha-2(I) chain, found in Mylodon darwinii (Giant ground sloth).